The following is a 950-amino-acid chain: Glycine dehydrogenase (decarboxylating) (950 aa).

Lys-698 is modified (N6-(pyridoxal phosphate)lysine).

The protein belongs to the GcvP family. The glycine cleavage system is composed of four proteins: P, T, L and H. Requires pyridoxal 5'-phosphate as cofactor.

It catalyses the reaction N(6)-[(R)-lipoyl]-L-lysyl-[glycine-cleavage complex H protein] + glycine + H(+) = N(6)-[(R)-S(8)-aminomethyldihydrolipoyl]-L-lysyl-[glycine-cleavage complex H protein] + CO2. The glycine cleavage system catalyzes the degradation of glycine. The P protein binds the alpha-amino group of glycine through its pyridoxal phosphate cofactor; CO(2) is released and the remaining methylamine moiety is then transferred to the lipoamide cofactor of the H protein. This chain is Glycine dehydrogenase (decarboxylating), found in Neisseria meningitidis serogroup A / serotype 4A (strain DSM 15465 / Z2491).